The chain runs to 193 residues: 3-isopropylmalate dehydratase small subunit (193 aa).

This sequence belongs to the LeuD family. LeuD type 1 subfamily. As to quaternary structure, heterodimer of LeuC and LeuD.

It catalyses the reaction (2R,3S)-3-isopropylmalate = (2S)-2-isopropylmalate. It functions in the pathway amino-acid biosynthesis; L-leucine biosynthesis; L-leucine from 3-methyl-2-oxobutanoate: step 2/4. Catalyzes the isomerization between 2-isopropylmalate and 3-isopropylmalate, via the formation of 2-isopropylmaleate. The protein is 3-isopropylmalate dehydratase small subunit of Bacillus cytotoxicus (strain DSM 22905 / CIP 110041 / 391-98 / NVH 391-98).